Consider the following 87-residue polypeptide: Small ribosomal subunit protein uS17 (87 aa).

This sequence belongs to the universal ribosomal protein uS17 family. Part of the 30S ribosomal subunit.

Its function is as follows. One of the primary rRNA binding proteins, it binds specifically to the 5'-end of 16S ribosomal RNA. This chain is Small ribosomal subunit protein uS17, found in Staphylococcus aureus (strain JH1).